Consider the following 1313-residue polypeptide: Inter-alpha-trypsin inhibitor heavy chain H6 (1313 aa).

An N-terminal signal peptide occupies residues 1–23; it reads MSGWRYLICVSFLLTILLELTYQ. The VIT domain occupies 24-150; that stretch reads GPPVPASSST…EVTFSLAYEE (127 aa). Residues Asn83, Asn374, Asn540, and Asn594 are each glycosylated (N-linked (GlcNAc...) asparagine). The region spanning 283–469 is the VWFA domain; sequence NVVFVIDVSS…LQLKGLYEEI (187 aa). Disordered regions lie at residues 612 to 644, 783 to 817, 856 to 928, and 959 to 983; these read QPKQ…HGLG, HSKP…TLQV, LKPS…EPLP, and PSRP…SPPN. The segment covering 623 to 640 has biased composition (polar residues); sequence QTSTSAGPDTIMPSSSSR. Residues 864-875 show a composition bias toward polar residues; it reads QISTSISLSKPE. Over residues 876–888 the composition is skewed to pro residues; it reads TPNPHMPQTPLPP. The segment covering 907-921 has biased composition (low complexity); that stretch reads TISSSTGPSSTTTTS. 2 N-linked (GlcNAc...) asparagine glycosylation sites follow: Asn971 and Asn1231.

Belongs to the ITIH family.

It is found in the secreted. This chain is Inter-alpha-trypsin inhibitor heavy chain H6 (ITIH6), found in Homo sapiens (Human).